Reading from the N-terminus, the 707-residue chain is DNA topoisomerase 1 (707 aa).

Residues 1–140 form the Toprim domain; that stretch reads MYAILAEKPS…IKRLWTSSMT (140 aa). Positions 157 to 596 constitute a Topo IA-type catalytic domain; it reads TLPLYYQAKA…HSKKLSSVLF (440 aa). The segment at 199 to 204 is interaction with DNA; that stretch reads SLGRVQ. The active-site O-(5'-phospho-DNA)-tyrosine intermediate is the tyrosine 323.

It belongs to the type IA topoisomerase family. Monomer.

The catalysed reaction is ATP-independent breakage of single-stranded DNA, followed by passage and rejoining.. Its function is as follows. Releases the supercoiling and torsional tension of DNA, which is introduced during the DNA replication and transcription, by transiently cleaving and rejoining one strand of the DNA duplex. Introduces a single-strand break via transesterification at a target site in duplex DNA. The scissile phosphodiester is attacked by the catalytic tyrosine of the enzyme, resulting in the formation of a DNA-(5'-phosphotyrosyl)-enzyme intermediate and the expulsion of a 3'-OH DNA strand. The free DNA strand then undergoes passage around the unbroken strand, thus removing DNA supercoils. Finally, in the religation step, the DNA 3'-OH attacks the covalent intermediate to expel the active-site tyrosine and restore the DNA phosphodiester backbone. The polypeptide is DNA topoisomerase 1 (topA) (Alkalihalophilus pseudofirmus (strain ATCC BAA-2126 / JCM 17055 / OF4) (Bacillus pseudofirmus)).